Here is a 920-residue protein sequence, read N- to C-terminus: B3 domain-containing protein REM17 (920 aa).

DNA-binding regions (TF-B3) lie at residues 12-105 (NPHF…LGPS), 153-250 (RFVA…CRAK), and 267-361 (CFEG…LCPT). Disordered regions lie at residues 405-438 (DDDQ…SSFV), 540-562 (LACS…KNTS), and 585-614 (DDDQ…SSDH). Residues 423-432 (NPREKVESSS) show a composition bias toward basic and acidic residues. The TF-B3 4 DNA-binding region spans 436–531 (SFVGSVNPSS…NKPVLSLCPT (96 aa)). 2 DNA-binding regions (TF-B3) span residues 616–714 (SFVA…SLSE) and 727–823 (YFVG…LCPA). The span at 842–852 (NSLSSNPSSGD) shows a compositional bias: low complexity. The disordered stretch occupies residues 842-870 (NSLSSNPSSGDDSSRSEESEEENMEDKNI).

The protein resides in the nucleus. The polypeptide is B3 domain-containing protein REM17 (REM17) (Arabidopsis thaliana (Mouse-ear cress)).